We begin with the raw amino-acid sequence, 254 residues long: L-erythrulose-1-phosphate isomerase (254 aa).

The Electrophile role is filled by H97. Catalysis depends on E170, which acts as the Proton acceptor. Substrate contacts are provided by G176 and S213.

It belongs to the triosephosphate isomerase family. In terms of assembly, homodimer.

The protein resides in the cytoplasm. It carries out the reaction L-erythrulose 1-phosphate = D-erythrulose 4-phosphate. It participates in carbohydrate metabolism; erythritol degradation. In terms of biological role, catalyzes the isomerization of D-erythrulose-4P to L-erythrulose-1P. The chain is L-erythrulose-1-phosphate isomerase from Mesorhizobium japonicum (strain LMG 29417 / CECT 9101 / MAFF 303099) (Mesorhizobium loti (strain MAFF 303099)).